Reading from the N-terminus, the 700-residue chain is Calpain-2 catalytic subunit (700 aa).

A2 is modified (N-acetylalanine). Residues 2–19 constitute a propeptide, anchors to the small subunit; the sequence is AGIAMKLAKDREAAEGLG. Positions 45-344 constitute a Calpain catalytic domain; the sequence is LFQDPSFPAL…YSRLEICNLT (300 aa). Positions 89, 91, and 96 each coordinate Ca(2+). The active site involves C105. Ca(2+)-binding residues include E175, Q229, and K230. Active-site residues include H262 and N286. Residues E292, D299, Q319, and E323 each contribute to the Ca(2+) site. The interval 345–514 is domain III; that stretch reads PDTLTCDSYK…KKADYQTVDD (170 aa). The interval 515-529 is linker; it reads EIEANIEEIEANEED. A domain IV region spans residues 530-700; it reads IGDGFRRLFA…LISWLSFSVL (171 aa). 16 residues coordinate Ca(2+): A542, D545, E547, E552, D585, D587, S589, K591, E596, D615, D617, S619, T621, E626, D658, and N661. EF-hand domains follow at residues 572–605 and 602–637; these read FSIE…TKIQ and TKIQ…AGFK. Positions 667 to 700 constitute an EF-hand 3 domain; sequence VRLEILFKIFKQLDPENTGTIQLDLISWLSFSVL.

This sequence belongs to the peptidase C2 family. Forms a heterodimer with a small (regulatory) subunit (CAPNS1). Interacts with CPEB3; this leads to cleavage of CPEB3. Requires Ca(2+) as cofactor. As to expression, ubiquitous.

Its subcellular location is the cytoplasm. It is found in the cell membrane. It carries out the reaction Broad endopeptidase specificity.. Activated by 200-1000 micromolar concentrations of calcium and inhibited by calpastatin. Calcium-regulated non-lysosomal thiol-protease which catalyze limited proteolysis of substrates involved in cytoskeletal remodeling and signal transduction. Proteolytically cleaves MYOC at 'Arg-226'. Proteolytically cleaves CPEB3 following neuronal stimulation which abolishes CPEB3 translational repressor activity, leading to translation of CPEB3 target mRNAs. This chain is Calpain-2 catalytic subunit (Capn2), found in Rattus norvegicus (Rat).